The primary structure comprises 891 residues: Translation initiation factor IF-2 (891 aa).

Residues 390-559 enclose the tr-type G domain; that stretch reads NRAPIVTIMG…LLQSDMLELK (170 aa). A G1 region spans residues 399 to 406; sequence GHVDHGKT. 399–406 contacts GTP; sequence GHVDHGKT. The G2 stretch occupies residues 424-428; sequence GITQS. The tract at residues 445–448 is G3; it reads DTPG. GTP contacts are provided by residues 445–449 and 499–502; these read DTPGH and NKID. The tract at residues 499–502 is G4; it reads NKID. Positions 535–537 are G5; sequence SAT.

Belongs to the TRAFAC class translation factor GTPase superfamily. Classic translation factor GTPase family. IF-2 subfamily.

The protein localises to the cytoplasm. One of the essential components for the initiation of protein synthesis. Protects formylmethionyl-tRNA from spontaneous hydrolysis and promotes its binding to the 30S ribosomal subunits. Also involved in the hydrolysis of GTP during the formation of the 70S ribosomal complex. This is Translation initiation factor IF-2 from Blochmanniella pennsylvanica (strain BPEN).